A 564-amino-acid chain; its full sequence is MFS-type transporter grgE (564 aa).

Residues 1–10 (MAENQVDPKR) are compositionally biased toward basic and acidic residues. A disordered region spans residues 1 to 52 (MAENQVDPKRNLPLYGAADESTSATDKEDEVENVRQNGSAPPIEEARESNEA). A glycan (N-linked (GlcNAc...) asparagine) is linked at Asn37. 7 helical membrane-spanning segments follow: residues 60–80 (HGLS…IISL), 101–118 (KVSW…GFQT), 131–151 (TTFL…GVAP), 161–181 (AIAG…IAFS), 192–212 (GLVG…GGAF), 220–240 (WCFY…LIFF), and 262–282 (LVGV…LQYG). Asn289 carries N-linked (GlcNAc...) asparagine glycosylation. Helical transmembrane passes span 293–313 (VIGL…WEYY), 329–349 (ALWA…ILLY), 368–388 (VRNL…GAFV), 392–412 (GIAT…TGLI), 425–445 (IGYQ…PMNI), 462–482 (IFLA…SAFV), and 531–551 (TFAI…FTPW).

The protein belongs to the major facilitator superfamily.

The protein resides in the membrane. Its function is as follows. MFS-type transporter; part of the gene cluster that mediates the biosynthesis of gregatin A, a fungal polyketide featuring an alkylated furanone core. The chain is MFS-type transporter grgE from Penicillium sp.